Consider the following 438-residue polypeptide: sn-glycerol-3-phosphate-binding periplasmic protein UgpB (438 aa).

An N-terminal signal peptide occupies residues 1-23; sequence MKPLHYTASALALGLALMGNAQA. Residues Tyr65, Glu89, Ser144, Ser270, Gly307, Tyr346, and Arg397 each coordinate sn-glycerol 3-phosphate.

It belongs to the bacterial solute-binding protein 1 family. The complex is composed of two ATP-binding proteins (UgpC), two transmembrane proteins (UgpA and UgpE) and a solute-binding protein (UgpB).

It is found in the periplasm. In terms of biological role, part of the ABC transporter complex UgpBAEC involved in sn-glycerol-3-phosphate (G3P) import. Binds G3P. This chain is sn-glycerol-3-phosphate-binding periplasmic protein UgpB (ugpB), found in Shigella dysenteriae serotype 1 (strain Sd197).